We begin with the raw amino-acid sequence, 407 residues long: tRNA-specific 2-thiouridylase MnmA (407 aa).

Residues 20–27 (AMSGGVDS) and Leu46 each bind ATP. The active-site Nucleophile is Cys114. An intrachain disulfide couples Cys114 to Cys210. ATP is bound at residue Gly138. Residues 160 to 162 (RDQ) are interaction with tRNA. Cys210 functions as the Cysteine persulfide intermediate in the catalytic mechanism.

It belongs to the MnmA/TRMU family.

The protein resides in the cytoplasm. The enzyme catalyses S-sulfanyl-L-cysteinyl-[protein] + uridine(34) in tRNA + AH2 + ATP = 2-thiouridine(34) in tRNA + L-cysteinyl-[protein] + A + AMP + diphosphate + H(+). Its function is as follows. Catalyzes the 2-thiolation of uridine at the wobble position (U34) of tRNA, leading to the formation of s(2)U34. The protein is tRNA-specific 2-thiouridylase MnmA of Bartonella tribocorum (strain CIP 105476 / IBS 506).